We begin with the raw amino-acid sequence, 214 residues long: uncharacterized protein (214 aa).

Residues 10 to 30 (LLLAGIGGFMVGGLASWVVSS) traverse the membrane as a helical segment. Residues 147-157 (SSQANSQSTQP) are compositionally biased toward polar residues. The segment at 147-166 (SSQANSQSTQPRDPIPTENF) is disordered.

It is found in the membrane. This is an uncharacterized protein from Schizosaccharomyces pombe (strain 972 / ATCC 24843) (Fission yeast).